The primary structure comprises 338 residues: Glyceraldehyde-3-phosphate dehydrogenase (338 aa).

NAD(+) contacts are provided by Arg-13, Ile-14, Asp-35, Arg-80, and Ser-123. D-glyceraldehyde 3-phosphate is bound by residues Ser-152, Cys-153, Thr-154, Thr-183, Arg-198, Thr-212, Gly-213, and Arg-235. Residue Cys-153 is the Nucleophile of the active site. An NAD(+)-binding site is contributed by Asn-317.

Belongs to the glyceraldehyde-3-phosphate dehydrogenase family. Homotetramer.

The protein localises to the tegument membrane. The enzyme catalyses D-glyceraldehyde 3-phosphate + phosphate + NAD(+) = (2R)-3-phospho-glyceroyl phosphate + NADH + H(+). Its pathway is carbohydrate degradation; glycolysis; pyruvate from D-glyceraldehyde 3-phosphate: step 1/5. This antigen is associated with human resistance to schistosomiasis. The chain is Glyceraldehyde-3-phosphate dehydrogenase from Schistosoma mansoni (Blood fluke).